Reading from the N-terminus, the 1098-residue chain is Eukaryotic translation initiation factor 3 subunit A (1098 aa).

The region spanning 324–503 (AQEQATRVLL…DCVRFGSSDA (180 aa)) is the PCI domain. Residues 574–844 (TEIERIHRRK…ARQAVIDSQR (271 aa)) adopt a coiled-coil conformation. 2 disordered regions span residues 599 to 648 (EKAA…KIKR) and 805 to 1098 (RAEK…NWRR). Basic and acidic residues-rich tracts occupy residues 608–648 (QAKR…KIKR), 805–857 (RAEK…REME), and 877–895 (MPQR…EPFR). Residues 905-914 (DSSWRSSAQP) are compositionally biased toward polar residues. Composition is skewed to basic and acidic residues over residues 916–978 (RKPD…ERGA) and 1054–1079 (LPPR…RDGP). A compositionally biased stretch (low complexity) spans 1080–1098 (NRNSGANNAGNADSANWRR).

This sequence belongs to the eIF-3 subunit A family. In terms of assembly, component of the eukaryotic translation initiation factor 3 (eIF-3) complex.

The protein localises to the cytoplasm. In terms of biological role, RNA-binding component of the eukaryotic translation initiation factor 3 (eIF-3) complex, which is involved in protein synthesis of a specialized repertoire of mRNAs and, together with other initiation factors, stimulates binding of mRNA and methionyl-tRNAi to the 40S ribosome. The eIF-3 complex specifically targets and initiates translation of a subset of mRNAs involved in cell proliferation. The sequence is that of Eukaryotic translation initiation factor 3 subunit A from Caenorhabditis briggsae.